The sequence spans 72 residues: Translation initiation factor IF-1 (72 aa).

The 72-residue stretch at M1 to K72 folds into the S1-like domain.

It belongs to the IF-1 family. As to quaternary structure, component of the 30S ribosomal translation pre-initiation complex which assembles on the 30S ribosome in the order IF-2 and IF-3, IF-1 and N-formylmethionyl-tRNA(fMet); mRNA recruitment can occur at any time during PIC assembly.

Its subcellular location is the cytoplasm. One of the essential components for the initiation of protein synthesis. Stabilizes the binding of IF-2 and IF-3 on the 30S subunit to which N-formylmethionyl-tRNA(fMet) subsequently binds. Helps modulate mRNA selection, yielding the 30S pre-initiation complex (PIC). Upon addition of the 50S ribosomal subunit IF-1, IF-2 and IF-3 are released leaving the mature 70S translation initiation complex. The polypeptide is Translation initiation factor IF-1 (Caldicellulosiruptor saccharolyticus (strain ATCC 43494 / DSM 8903 / Tp8T 6331)).